Consider the following 423-residue polypeptide: Glycine amidinotransferase, mitochondrial (423 aa).

A mitochondrion-targeting transit peptide spans 1 to 43 (MLRVRCLRGGSRGAEAVHYIGSRLGGSLTGWVQRTFQSTQAAT). Phosphoserine is present on residues Ser46 and Ser49. An arginine-binding site is contributed by Asp170. Residues Asp254 and His303 contribute to the active site. Arginine contacts are provided by Asp305, Arg322, Ser354, and Ser355. Lys385 bears the N6-acetyllysine mark. The active-site Amidino-cysteine intermediate is Cys407.

It belongs to the amidinotransferase family. Homodimer. Expressed in kidney, brain, gonads, uterus, and embryonic head, chest and abdomen. Maternally expressed in the placenta and yolk sac of embryos.

Its subcellular location is the mitochondrion inner membrane. The enzyme catalyses L-arginine + glycine = guanidinoacetate + L-ornithine. It catalyses the reaction 4-aminobutanoate + L-arginine = 4-guanidinobutanoate + L-ornithine. The catalysed reaction is beta-alanine + L-arginine = 3-guanidinopropanoate + L-ornithine. It carries out the reaction taurine + L-arginine = taurocyamine + L-ornithine. It participates in amine and polyamine biosynthesis; creatine biosynthesis; creatine from L-arginine and glycine: step 1/2. In terms of biological role, transamidinase that catalyzes the transfer of the amidino group of L-arginine onto the amino moiety of acceptor metabolites such as glycine, beta-alanine, gamma-aminobutyric acid (GABA) and taurine yielding the corresponding guanidine derivatives. Catalyzes the rate-limiting step of creatine biosynthesis, namely the transfer of the amidino group from L-arginine to glycine to generate guanidinoacetate, which is then methylated by GAMT to form creatine. Provides creatine as a source for ATP generation in tissues with high energy demands, in particular skeletal muscle, heart and brain. The polypeptide is Glycine amidinotransferase, mitochondrial (Gatm) (Mus musculus (Mouse)).